The following is a 203-amino-acid chain: UPF0637 protein SSP1683 (203 aa).

It belongs to the UPF0637 family.

This is UPF0637 protein SSP1683 from Staphylococcus saprophyticus subsp. saprophyticus (strain ATCC 15305 / DSM 20229 / NCIMB 8711 / NCTC 7292 / S-41).